The following is a 788-amino-acid chain: Endonuclease MutS2 (788 aa).

An ATP-binding site is contributed by Gly-335–Thr-342. The disordered stretch occupies residues Val-688–Ala-708. Residues Gly-699–Ala-708 are compositionally biased toward polar residues. Residues Leu-713–Lys-788 enclose the Smr domain.

This sequence belongs to the DNA mismatch repair MutS family. MutS2 subfamily. In terms of assembly, homodimer. Binds to stalled ribosomes, contacting rRNA.

In terms of biological role, endonuclease that is involved in the suppression of homologous recombination and thus may have a key role in the control of bacterial genetic diversity. Its function is as follows. Acts as a ribosome collision sensor, splitting the ribosome into its 2 subunits. Detects stalled/collided 70S ribosomes which it binds and splits by an ATP-hydrolysis driven conformational change. Acts upstream of the ribosome quality control system (RQC), a ribosome-associated complex that mediates the extraction of incompletely synthesized nascent chains from stalled ribosomes and their subsequent degradation. Probably generates substrates for RQC. The protein is Endonuclease MutS2 of Exiguobacterium sibiricum (strain DSM 17290 / CCUG 55495 / CIP 109462 / JCM 13490 / 255-15).